The primary structure comprises 191 residues: Peptidyl-tRNA hydrolase (191 aa).

Tyr14 is a tRNA binding site. The active-site Proton acceptor is His19. TRNA is bound by residues Phe64, Asn66, and Asn112.

The protein belongs to the PTH family. As to quaternary structure, monomer.

The protein resides in the cytoplasm. It carries out the reaction an N-acyl-L-alpha-aminoacyl-tRNA + H2O = an N-acyl-L-amino acid + a tRNA + H(+). In terms of biological role, hydrolyzes ribosome-free peptidyl-tRNAs (with 1 or more amino acids incorporated), which drop off the ribosome during protein synthesis, or as a result of ribosome stalling. Functionally, catalyzes the release of premature peptidyl moieties from peptidyl-tRNA molecules trapped in stalled 50S ribosomal subunits, and thus maintains levels of free tRNAs and 50S ribosomes. This is Peptidyl-tRNA hydrolase from Novosphingobium aromaticivorans (strain ATCC 700278 / DSM 12444 / CCUG 56034 / CIP 105152 / NBRC 16084 / F199).